Here is a 389-residue protein sequence, read N- to C-terminus: Phosphopentomutase (389 aa).

Residues D9, D282, H287, D323, H324, and H335 each contribute to the Mn(2+) site.

This sequence belongs to the phosphopentomutase family. Requires Mn(2+) as cofactor.

Its subcellular location is the cytoplasm. The enzyme catalyses 2-deoxy-alpha-D-ribose 1-phosphate = 2-deoxy-D-ribose 5-phosphate. The catalysed reaction is alpha-D-ribose 1-phosphate = D-ribose 5-phosphate. Its pathway is carbohydrate degradation; 2-deoxy-D-ribose 1-phosphate degradation; D-glyceraldehyde 3-phosphate and acetaldehyde from 2-deoxy-alpha-D-ribose 1-phosphate: step 1/2. Its function is as follows. Isomerase that catalyzes the conversion of deoxy-ribose 1-phosphate (dRib-1-P) and ribose 1-phosphate (Rib-1-P) to deoxy-ribose 5-phosphate (dRib-5-P) and ribose 5-phosphate (Rib-5-P), respectively. The sequence is that of Phosphopentomutase from Pseudothermotoga lettingae (strain ATCC BAA-301 / DSM 14385 / NBRC 107922 / TMO) (Thermotoga lettingae).